The following is a 587-amino-acid chain: Protein cereblon (587 aa).

3 disordered regions span residues 1–56, 78–113, and 157–195; these read MDEE…PAEY, DVLQ…GLPN, and FSQE…IDIG. Polar residues-rich tracts occupy residues 22-31 and 86-96; these read EDQSQSQGLQ and SEGSHPSSDMS. The segment covering 159 to 168 has biased composition (basic and acidic residues); that stretch reads QERRRSRTSE. The span at 170-181 shows a compositional bias: acidic residues; it reads TSQEEAAEEPDD. A compositionally biased stretch (pro residues) spans 182–191; the sequence is PPPQQPPLPP. Residues 227-453 form the Lon N-terminal domain; the sequence is HMLIFLHHHI…LIKSTFKDET (227 aa). Residues 452–561 form the CULT domain; it reads ETLFFCRYCN…LSGSSVRIGK (110 aa). Zn(2+) is bound by residues cysteine 457, cysteine 460, cysteine 526, and cysteine 529.

This sequence belongs to the CRBN family. Likely a component of a DCX (DDB1-CUL4-X-box) protein ligase complex. May interact with pic/DDB1. Ubiquitinated.

The protein localises to the nucleus. It functions in the pathway protein modification; protein ubiquitination. Functionally, substrate recognition component of a DCX (DDB1-CUL4-X-box) E3 protein ligase complex that mediates the ubiquitination and subsequent proteasomal degradation of target proteins. Has an essential role in mediating growth by negatively regulating insulin signaling. It also has a role in maintaining presynaptic function in the neuromuscular junction synapses of third-instar larvae. This Drosophila simulans (Fruit fly) protein is Protein cereblon.